Reading from the N-terminus, the 138-residue chain is Large ribosomal subunit protein uL16 (138 aa).

Residues 1–13 (MLQPSRRKYRKEQ) are compositionally biased toward basic residues. The interval 1–20 (MLQPSRRKYRKEQKGRNTGL) is disordered.

This sequence belongs to the universal ribosomal protein uL16 family. As to quaternary structure, part of the 50S ribosomal subunit.

Functionally, binds 23S rRNA and is also seen to make contacts with the A and possibly P site tRNAs. The chain is Large ribosomal subunit protein uL16 from Bordetella avium (strain 197N).